The chain runs to 212 residues: Ribonuclease HII (212 aa).

The region spanning 28 to 212 (SIIAGVDEVG…KSFAPIRQVV (185 aa)) is the RNase H type-2 domain. A divalent metal cation is bound by residues D34, E35, and D127.

The protein belongs to the RNase HII family. Mn(2+) is required as a cofactor. Mg(2+) serves as cofactor.

It localises to the cytoplasm. The enzyme catalyses Endonucleolytic cleavage to 5'-phosphomonoester.. Its function is as follows. Endonuclease that specifically degrades the RNA of RNA-DNA hybrids. The sequence is that of Ribonuclease HII from Chlamydia caviae (strain ATCC VR-813 / DSM 19441 / 03DC25 / GPIC) (Chlamydophila caviae).